The following is a 625-amino-acid chain: MIFLYQVVHFILFTSVSGECVTQLLKDTCFEGGDITTVFTPSAKYCQVVCTYHPRCLLFTFTAESPSEDPTRWFTCVLKDSVTETLPRVNRTAAISGYSFKQCSHQISACNKDIYVDLDMKGINYNSSVAKSAQECQERCTDDVHCHFFTYATRQFPSLEHRNICLLKHTQTGTPTRITKLDKVVSGFSLKSCALSNLACIRDIFPNTVFADSNIDSVMAPDAFVCGRICTHHPGCLFFTFFSQEWPKESQRNLCLLKTSESGLPSTRIKKSKALSGFSLQSCRHSIPVFCHSSFYHDTDFLGEELDIVAAKSHEACQKLCTNAVRCQFFTYTPAQASCNEGKGKCYLKLSSNGSPTKILHGRGGISGYTLRLCKMDNECTTKIKPRIVGGTASVRGEWPWQVTLHTTSPTQRHLCGGSIIGNQWILTAAHCFYGVESPKILRVYSGILNQSEIKEDTSFFGVQEIIIHDQYKMAESGYDIALLKLETTVNYTDSQRPICLPSKGDRNVIYTDCWVTGWGYRKLRDKIQNTLQKAKIPLVTNEECQKRYRGHKITHKMICAGYREGGKDACKGDSGGPLSCKHNEVWHLVGITSWGEGCAQRERPGVYTNVVEYVDWILEKTQAV.

The first 18 residues, 1 to 18 (MIFLYQVVHFILFTSVSG), serve as a signal peptide directing secretion. Apple domains lie at 20-103 (CVTQ…FKQC), 110-193 (CNKD…LKSC), 200-283 (CIRD…LQSC), and 291-374 (CHSS…LRLC). 17 disulfides stabilise this stretch: C20/C103, C46/C76, C50/C56, C110/C193, C136/C165, C140/C146, C200/C283, C226/C255, C230/C236, C291/C374, C317/C346, C321/C327, C380/C500, C416/C432, C514/C581, C545/C560, and C571/C599. Residues N90 and N126 are each glycosylated (N-linked (GlcNAc...) (complex) asparagine). N-linked (GlcNAc...) (complex) asparagine; atypical glycosylation is present at N163. A Peptidase S1 domain is found at 388 to 623 (IVGGTASVRG…YVDWILEKTQ (236 aa)). The active-site Charge relay system is the H431. The N-linked (GlcNAc...) (complex) asparagine glycan is linked to N450. The active-site Charge relay system is the D480. N491 carries N-linked (GlcNAc...) (complex) asparagine glycosylation. Position 547 to 550 (547 to 550 (KRYR)) interacts with heparin. Residue S575 is the Charge relay system of the active site.

It belongs to the peptidase S1 family. Plasma kallikrein subfamily. In terms of assembly, homodimer; disulfide-linked. Can form non-covalently bonded homodimers. After activation the heavy and light chains are also linked by a disulfide bond. Interacts (activated) with F9 (inactive and activated) in calcium-dependent manner. Forms a heterodimer with SERPINA5. Interacts with Anopheles gambiae D7L2. Interacts (activated) with guianensin, an anticoagulant protein from Simulium guianense saliva. N-glycosylated on both chains. N-glycosylated sites mainly consist of nonfucosylated sialylated biantennary (in high abundance) and/or triantennary (in low abundance) complex structures. Glycosylation at Asn-163 uses a rare non-canonical Asn-X-Cys glycosite. In terms of processing, activated by factor XIIa (or XII), which cleaves each polypeptide after Arg-387 into the light chain, which contains the active site, and the heavy chain, which associates with high molecular weight (HMW) kininogen. Activated by F12 (activated); the presence of negatively charged surfaces accelerates activation. Activated by F2 (thrombin); the presence of negatively charged surfaces, such as polyphosphate and dextran sulfate, strongly accelerates activation. Autoactivated; the presence of negatively charged surfaces, such as polyphosphate and dextran sulfate, accelerates autoactivation and autolysis. As to expression, isoform 2 is produced by platelets and megakaryocytes but absent from other blood cells.

The protein localises to the secreted. The enzyme catalyses Selective cleavage of Arg-|-Ala and Arg-|-Val bonds in factor IX to form factor IXa.. Inhibited by SERPINA5. Its function is as follows. Factor XI triggers the middle phase of the intrinsic pathway of blood coagulation by activating factor IX. The polypeptide is Coagulation factor XI (F11) (Homo sapiens (Human)).